The chain runs to 912 residues: Ubiquitin carboxyl-terminal hydrolase 20 (912 aa).

Residues 6–111 (DLCPHLDSIG…GPAPKFSEQD (106 aa)) form a UBP-type zinc finger. The Zn(2+) site is built by C8, H10, C30, C33, C43, C48, C53, H60, H64, H70, C83, and C86. Residues 101-120 (PGPAPKFSEQDSPPPSHPLK) are disordered. Residues S112, S132, and S134 each carry the phosphoserine modification. In terms of domain architecture, USP spans 145-683 (TGMKNLGNSC…EAYVLFYRKS (539 aa)). The active-site Nucleophile is the C154. Disordered stretches follow at residues 258–308 (LTEA…GSQA) and 322–415 (ISEK…ASPV). T259 carries the post-translational modification Phosphothreonine. Residues 260 to 280 (EARDSDSSDTDEKREGDRSPS) are compositionally biased toward basic and acidic residues. At S306 the chain carries Phosphoserine. The span at 322-333 (ISEKERMKDRKF) shows a compositional bias: basic and acidic residues. Position 369 is a phosphoserine (S369). T378 carries the phosphothreonine modification. Phosphoserine occurs at positions 408 and 413. The Proton acceptor role is filled by H641. DUSP domains follow at residues 685-778 (EEAV…LYVC) and 787-890 (ALAK…RQSV).

Belongs to the peptidase C19 family. USP20/USP33 subfamily. In terms of assembly, interacts with VHL, leading to its ubiquitination and subsequent degradation. Interacts with CCP110. Interacts with DIO2. Interacts with HIF1A. Interacts with ADRB2. Interacts with USP18. In terms of processing, ubiquitinated via a VHL-dependent pathway for proteasomal degradation.

It localises to the cytoplasm. The protein resides in the endoplasmic reticulum. It is found in the perinuclear region. Its subcellular location is the cytoskeleton. The protein localises to the microtubule organizing center. It localises to the centrosome. It catalyses the reaction Thiol-dependent hydrolysis of ester, thioester, amide, peptide and isopeptide bonds formed by the C-terminal Gly of ubiquitin (a 76-residue protein attached to proteins as an intracellular targeting signal).. Functionally, deubiquitinating enzyme that plays a role in many cellular processes including autophagy, cellular antiviral response or membrane protein biogenesis. Attenuates TLR4-mediated NF-kappa-B signaling by cooperating with beta-arrestin-2/ARRB2 and inhibiting TRAF6 autoubiquitination. Promotes cellular antiviral responses by deconjugating 'Lys-33' and 'Lys-48'-linked ubiquitination of STING1 leading to its stabilization. Plays an essential role in autophagy induction by regulating the ULK1 stability through deubiquitination of ULK1. Acts as a positive regulator for NF-kappa-B activation by TNF-alpha through deubiquitinating 'Lys-48'-linked polyubiquitination of SQSTM1, leading to its increased stability. Acts as a regulator of G-protein coupled receptor (GPCR) signaling by mediating the deubiquitination beta-2 adrenergic receptor (ADRB2). Plays a central role in ADRB2 recycling and resensitization after prolonged agonist stimulation by constitutively binding ADRB2, mediating deubiquitination of ADRB2 and inhibiting lysosomal trafficking of ADRB2. Upon dissociation, it is probably transferred to the translocated beta-arrestins, possibly leading to beta-arrestins deubiquitination and disengagement from ADRB2. This suggests the existence of a dynamic exchange between the ADRB2 and beta-arrestins. Deubiquitinates DIO2, thereby regulating thyroid hormone regulation. Deubiquitinates HIF1A, leading to stabilize HIF1A and enhance HIF1A-mediated activity. Deubiquitinates MCL1, a pivotal member of the anti-apoptotic Bcl-2 protein family to regulate its stability. Within the endoplasmic reticulum, participates with USP33 in the rescue of post-translationally targeted membrane proteins that are inappropriately ubiquitinated by the cytosolic protein quality control in the cytosol. The protein is Ubiquitin carboxyl-terminal hydrolase 20 (USP20) of Bos taurus (Bovine).